We begin with the raw amino-acid sequence, 345 residues long: Erythronate-4-phosphate dehydrogenase (345 aa).

Serine 45 provides a ligand contact to substrate. Residues aspartate 146 and threonine 174 each contribute to the NAD(+) site. Arginine 207 is an active-site residue. Aspartate 227 is an NAD(+) binding site. Glutamate 232 is a catalytic residue. The active-site Proton donor is the histidine 249. Position 252 (glycine 252) interacts with NAD(+).

The protein belongs to the D-isomer specific 2-hydroxyacid dehydrogenase family. PdxB subfamily. In terms of assembly, homodimer.

The protein localises to the cytoplasm. It carries out the reaction 4-phospho-D-erythronate + NAD(+) = (R)-3-hydroxy-2-oxo-4-phosphooxybutanoate + NADH + H(+). The protein operates within cofactor biosynthesis; pyridoxine 5'-phosphate biosynthesis; pyridoxine 5'-phosphate from D-erythrose 4-phosphate: step 2/5. Functionally, catalyzes the oxidation of erythronate-4-phosphate to 3-hydroxy-2-oxo-4-phosphonooxybutanoate. This Ruthia magnifica subsp. Calyptogena magnifica protein is Erythronate-4-phosphate dehydrogenase.